The primary structure comprises 49 residues: Large ribosomal subunit protein bL33 (49 aa).

This sequence belongs to the bacterial ribosomal protein bL33 family.

This chain is Large ribosomal subunit protein bL33, found in Pseudothermotoga lettingae (strain ATCC BAA-301 / DSM 14385 / NBRC 107922 / TMO) (Thermotoga lettingae).